A 356-amino-acid polypeptide reads, in one-letter code: Phospho-N-acetylmuramoyl-pentapeptide-transferase (356 aa).

10 helical membrane-spanning segments follow: residues 3-23 (QILF…PLLI), 51-71 (TMGG…AKVI), 80-100 (GLLV…DDYI), 114-134 (AKMA…LQFP), 152-172 (FGWS…ILAM), 185-205 (LATG…LWQF), 227-247 (PLDL…FLWW), 254-274 (IFMG…LAIL), 279-299 (FLLA…VIQV), and 333-353 (FWII…AGWA).

The protein belongs to the glycosyltransferase 4 family. MraY subfamily. It depends on Mg(2+) as a cofactor.

Its subcellular location is the cell membrane. It catalyses the reaction UDP-N-acetyl-alpha-D-muramoyl-L-alanyl-gamma-D-glutamyl-meso-2,6-diaminopimeloyl-D-alanyl-D-alanine + di-trans,octa-cis-undecaprenyl phosphate = di-trans,octa-cis-undecaprenyl diphospho-N-acetyl-alpha-D-muramoyl-L-alanyl-D-glutamyl-meso-2,6-diaminopimeloyl-D-alanyl-D-alanine + UMP. It participates in cell wall biogenesis; peptidoglycan biosynthesis. In terms of biological role, catalyzes the initial step of the lipid cycle reactions in the biosynthesis of the cell wall peptidoglycan: transfers peptidoglycan precursor phospho-MurNAc-pentapeptide from UDP-MurNAc-pentapeptide onto the lipid carrier undecaprenyl phosphate, yielding undecaprenyl-pyrophosphoryl-MurNAc-pentapeptide, known as lipid I. In Streptomyces griseus subsp. griseus (strain JCM 4626 / CBS 651.72 / NBRC 13350 / KCC S-0626 / ISP 5235), this protein is Phospho-N-acetylmuramoyl-pentapeptide-transferase.